The primary structure comprises 400 residues: Tryptophan synthase beta chain (400 aa).

At Lys92 the chain carries N6-(pyridoxal phosphate)lysine.

It belongs to the TrpB family. As to quaternary structure, tetramer of two alpha and two beta chains. Requires pyridoxal 5'-phosphate as cofactor.

The enzyme catalyses (1S,2R)-1-C-(indol-3-yl)glycerol 3-phosphate + L-serine = D-glyceraldehyde 3-phosphate + L-tryptophan + H2O. It functions in the pathway amino-acid biosynthesis; L-tryptophan biosynthesis; L-tryptophan from chorismate: step 5/5. The beta subunit is responsible for the synthesis of L-tryptophan from indole and L-serine. The chain is Tryptophan synthase beta chain from Neisseria meningitidis serogroup B (strain ATCC BAA-335 / MC58).